We begin with the raw amino-acid sequence, 610 residues long: Elongation factor 4 (610 aa).

Residues 11-193 form the tr-type G domain; sequence EKIRNFSIIA…QIVEKVPAPT (183 aa). GTP contacts are provided by residues 23 to 28 and 140 to 143; these read DHGKST and NKID.

The protein belongs to the TRAFAC class translation factor GTPase superfamily. Classic translation factor GTPase family. LepA subfamily.

Its subcellular location is the cell membrane. The catalysed reaction is GTP + H2O = GDP + phosphate + H(+). Its function is as follows. Required for accurate and efficient protein synthesis under certain stress conditions. May act as a fidelity factor of the translation reaction, by catalyzing a one-codon backward translocation of tRNAs on improperly translocated ribosomes. Back-translocation proceeds from a post-translocation (POST) complex to a pre-translocation (PRE) complex, thus giving elongation factor G a second chance to translocate the tRNAs correctly. Binds to ribosomes in a GTP-dependent manner. This Streptococcus pyogenes serotype M1 protein is Elongation factor 4.